Consider the following 459-residue polypeptide: Putrescine aminotransferase (459 aa).

Pyridoxal 5'-phosphate contacts are provided by residues 150-151 (GT) and Q274. N6-(pyridoxal phosphate)lysine is present on K300. Residue T332 participates in pyridoxal 5'-phosphate binding.

It belongs to the class-III pyridoxal-phosphate-dependent aminotransferase family. Putrescine aminotransferase subfamily. Pyridoxal 5'-phosphate is required as a cofactor.

It carries out the reaction an alkane-alpha,omega-diamine + 2-oxoglutarate = an omega-aminoaldehyde + L-glutamate. The enzyme catalyses putrescine + 2-oxoglutarate = 1-pyrroline + L-glutamate + H2O. It catalyses the reaction cadaverine + 2-oxoglutarate = 5-aminopentanal + L-glutamate. Its pathway is amine and polyamine degradation; putrescine degradation; 4-aminobutanal from putrescine (transaminase route): step 1/1. Its function is as follows. Catalyzes the aminotransferase reaction from putrescine to 2-oxoglutarate, leading to glutamate and 4-aminobutanal, which spontaneously cyclizes to form 1-pyrroline. This is the first step in one of two pathways for putrescine degradation, where putrescine is converted into 4-aminobutanoate (gamma-aminobutyrate or GABA) via 4-aminobutanal. Also functions as a cadaverine transaminase in a a L-lysine degradation pathway to succinate that proceeds via cadaverine, glutarate and L-2-hydroxyglutarate. This Escherichia coli O8 (strain IAI1) protein is Putrescine aminotransferase.